Consider the following 100-residue polypeptide: uncharacterized protein (100 aa).

Residues 28–45 (VFLVFYIITMVKIYIFLI) traverse the membrane as a helical segment.

It localises to the membrane. This is an uncharacterized protein from Saccharomyces cerevisiae (strain ATCC 204508 / S288c) (Baker's yeast).